The following is a 58-amino-acid chain: Mastoparan-VT7 (58 aa).

A signal peptide spans 1 to 27; sequence MKNTILILFTAFIALLGFFGMSAEALA. 4 AXPX repeats span residues 27-30, 31-34, 35-38, and 41-44; these read ADPK, ADPL, AGPN, and ADPE. A propeptide spanning residues 28 to 45 is cleaved from the precursor; that stretch reads DPKADPLAGPNPDADPEA.

This sequence belongs to the MCD family. Mastoparan subfamily. As to expression, expressed by the venom gland.

It localises to the secreted. The synthetic peptide shows antimicrobial activities against Gram-negative bacteria (but not against all strains tested), Gram-positive bacteria (all strains tested) and the fungi C.albicans (but not C.parapsilosis). Exhibits little hemolytic activity against washed human erythrocytes. The protein is Mastoparan-VT7 of Vespa tropica (Greater banded hornet).